Reading from the N-terminus, the 238-residue chain is Orotidine 5'-phosphate decarboxylase (238 aa).

Substrate contacts are provided by residues Asp-18, Lys-40, 67-76 (DMKLLDIDNT), Thr-122, Arg-183, Gln-192, and Arg-213. The active-site Proton donor is Lys-69.

It belongs to the OMP decarboxylase family. Type 1 subfamily. Homodimer.

It carries out the reaction orotidine 5'-phosphate + H(+) = UMP + CO2. Its pathway is pyrimidine metabolism; UMP biosynthesis via de novo pathway; UMP from orotate: step 2/2. Functionally, catalyzes the decarboxylation of orotidine 5'-monophosphate (OMP) to uridine 5'-monophosphate (UMP). In Brucella abortus (strain S19), this protein is Orotidine 5'-phosphate decarboxylase.